The chain runs to 447 residues: Voltage-gated purine nucleotide uniporter SLC17A9 (447 aa).

The tract at residues Met1 to Asp26 is disordered. A compositionally biased stretch (basic and acidic residues) spans Glu14–Asp26. 11 helical membrane passes run Leu36–Cys58, Gly74–Leu94, Val103–His123, Leu129–Ala149, Thr169–Leu189, Val197–Leu217, Val252–Trp272, Trp287–Ile307, Val327–Leu347, Gly380–Leu400, and Cys413–Gly433.

Belongs to the major facilitator superfamily. Sodium/anion cotransporter family.

It is found in the cytoplasmic vesicle. The protein localises to the secretory vesicle. Its subcellular location is the chromaffin granule membrane. It localises to the secretory vesicle membrane. The protein resides in the lysosome membrane. It catalyses the reaction ATP(in) = ATP(out). The enzyme catalyses ADP(in) = ADP(out). It carries out the reaction GTP(in) = GTP(out). Activity is chloride-dependent. Voltage-gated ATP nucleotide uniporter that can also transport the purine nucleotides ADP and GTP. Uses the membrane potential as the driving force to control ATP accumulation in lysosomes and secretory vesicles. By controlling ATP storage in lysosomes, regulates ATP-dependent proteins of these organelles. Also indirectly regulates the exocytosis of ATP through its import into lysosomes in astrocytes and secretory vesicles such as adrenal chromaffin granules, mucin granules and synaptic vesicles. This Rattus norvegicus (Rat) protein is Voltage-gated purine nucleotide uniporter SLC17A9.